The primary structure comprises 323 residues: Staphylococcal-like nuclease CAN1 (323 aa).

A lipid anchor (N-myristoyl glycine) is attached at G2. C11 carries S-palmitoyl cysteine lipidation. The 177-residue stretch at 130 to 306 (NTLPVDTKSV…RQKRVGLWAS (177 aa)) folds into the TNase-like domain. D143 is a Ca(2+) binding site. Residue R213 is part of the active site. Ca(2+) is bound at residue D218. Catalysis depends on residues E221 and R255.

Belongs to the thermonuclease family. Requires Ca(2+) as cofactor.

It is found in the cell membrane. Inhibited by Zn(2+). Its function is as follows. Enzyme that catalyzes the hydrolysis of both DNA and RNA at the 5' position of the phosphodiester bond. Possesses activity toward the single-stranded DNA, double-stranded DNA and RNA. May be involved in genomic DNA degradation during programmed cell death. In Arabidopsis thaliana (Mouse-ear cress), this protein is Staphylococcal-like nuclease CAN1 (CAN1).